A 235-amino-acid polypeptide reads, in one-letter code: Secretory carrier-associated membrane protein 5B (235 aa).

The Cytoplasmic portion of the chain corresponds to Met-1–Arg-39. The helical transmembrane segment at Leu-40–Ala-60 threads the bilayer. The Extracellular portion of the chain corresponds to Trp-61–Gly-67. The helical transmembrane segment at Ala-68 to Cys-88 threads the bilayer. The Cytoplasmic portion of the chain corresponds to Trp-89–Ser-102. The chain crosses the membrane as a helical span at residues Phe-103–Gly-125. Topologically, residues Ile-126–Ala-148 are extracellular. Residues Val-149–Leu-169 traverse the membrane as a helical segment. Topologically, residues Thr-170–Met-235 are cytoplasmic.

The protein belongs to the SCAMP family. SCAMP5 subfamily.

It is found in the cell membrane. Its subcellular location is the golgi apparatus membrane. The protein resides in the golgi apparatus. The protein localises to the trans-Golgi network membrane. It localises to the recycling endosome membrane. It is found in the cytoplasmic vesicle. Its subcellular location is the secretory vesicle. The protein resides in the synaptic vesicle membrane. Functionally, required for the calcium-dependent exocytosis of signal sequence-containing cytokines. Probably acts in cooperation with the SNARE machinery. This is Secretory carrier-associated membrane protein 5B (scamp5-b) from Xenopus laevis (African clawed frog).